We begin with the raw amino-acid sequence, 40 residues long: Sarcotoxin-1D (40 aa).

This sequence belongs to the cecropin family.

Its subcellular location is the secreted. In terms of biological role, sarcotoxins, which are potent bactericidal proteins, are produced in response to injury. They are cytotoxic to both Gram-positive and Gram-negative bacteria. The chain is Sarcotoxin-1D from Sarcophaga peregrina (Flesh fly).